The chain runs to 123 residues: MSPLIVGTLIIILLSGLATAFYVTWQGRLICAGVGLILEQAYEGGQMFNTLMAHCFETYNGVEKSGTQCVADWLKVGLLAVTFGAGGPRLVNTLGGSSPTTKRVIYIVMILLVLITLAVNLKH.

The first 20 residues, 1-20 (MSPLIVGTLIIILLSGLATA), serve as a signal peptide directing secretion. G96 is lipidated: GPI-anchor amidated glycine. A propeptide spans 97-123 (SSPTTKRVIYIVMILLVLITLAVNLKH) (removed in mature form).

It localises to the cell membrane. This is an uncharacterized protein from Schizosaccharomyces pombe (strain 972 / ATCC 24843) (Fission yeast).